A 118-amino-acid chain; its full sequence is Basic phospholipase A2 nigroxin B (118 aa).

7 cysteine pairs are disulfide-bonded: cysteine 11–cysteine 70, cysteine 25–cysteine 117, cysteine 27–cysteine 43, cysteine 42–cysteine 98, cysteine 49–cysteine 91, cysteine 59–cysteine 84, and cysteine 77–cysteine 89. Residues tyrosine 26, glycine 28, and glycine 30 each contribute to the Ca(2+) site. Residue histidine 46 is part of the active site. Aspartate 47 contributes to the Ca(2+) binding site. Aspartate 92 is a catalytic residue.

The protein belongs to the phospholipase A2 family. Group I subfamily. D49 sub-subfamily. Requires Ca(2+) as cofactor. Expressed by the venom gland.

The protein localises to the secreted. The catalysed reaction is a 1,2-diacyl-sn-glycero-3-phosphocholine + H2O = a 1-acyl-sn-glycero-3-phosphocholine + a fatty acid + H(+). Snake venom phospholipase A2 (PLA2) that has only a weak enzymatic activity. It has a myotoxic activity in vivo (dystrophic effect). PLA2 catalyzes the calcium-dependent hydrolysis of the 2-acyl groups in 3-sn-phosphoglycerides. This chain is Basic phospholipase A2 nigroxin B, found in Micrurus nigrocinctus (Central American coral snake).